We begin with the raw amino-acid sequence, 320 residues long: Putative olfactory receptor 2W5 pseudogene (320 aa).

N-linked (GlcNAc...) asparagine glycosylation is present at Asn-5. 4 helical membrane-spanning segments follow: residues 30–50 (VILI…LLLV), 58–78 (PMYF…ASIA), 98–118 (VAQL…LVVM), and 140–160 (LCLQ…FIMC). A disulfide bond links Cys-97 and Cys-179. The interval 267 to 320 (LPRSGEVPDSLLHHRHSQHQPPHLHFEEQGCEGDHEETSGVGERGWGASTRGTL) is disordered. The span at 290 to 304 (LHFEEQGCEGDHEET) shows a compositional bias: basic and acidic residues.

This sequence belongs to the G-protein coupled receptor 1 family.

Its subcellular location is the cell membrane. Odorant receptor. The chain is Putative olfactory receptor 2W5 pseudogene from Homo sapiens (Human).